The primary structure comprises 752 residues: Probable GTP-binding protein OBGC1, chloroplastic (752 aa).

The N-terminal 90 residues, 1–90 (MAPAVAVVAA…RFPTANPEPR (90 aa)), are a transit peptide targeting the chloroplast. The tract at residues 19 to 121 (FSAEARRNTK…EEDEVELGLR (103 aa)) is disordered. Residues 26–36 (NTKGSRSKRGS) show a composition bias toward basic residues. Over residues 103–117 (GDDEEDEEEEEDEVE) the composition is skewed to acidic residues. The 159-residue stretch at 294-452 (MRCFDTAKIY…MWIDLELKLV (159 aa)) folds into the Obg domain. The 169-residue stretch at 453 to 621 (ADVGIVGAPN…VVLAAYKVLQ (169 aa)) folds into the OBG-type G domain. Residues 459–466 (GAPNAGKS), 484–488 (FTTLL), 506–509 (DLPG), 573–576 (NKMD), and 602–604 (SAM) each bind GTP. Positions 466 and 486 each coordinate Mg(2+). In terms of domain architecture, OCT spans 649-728 (ERRAPMNEFE…VGEMEMVWTD (80 aa)). The disordered stretch occupies residues 728–752 (DEPSKTRSSKTMNSKDDSVRWPEFG). A compositionally biased stretch (basic and acidic residues) spans 740-752 (NSKDDSVRWPEFG).

It belongs to the TRAFAC class OBG-HflX-like GTPase superfamily. OBG GTPase family. The cofactor is Mg(2+).

The protein resides in the plastid. It localises to the chloroplast. Its function is as follows. Probable GTP-binding protein that may play a role in chloroplast development. The chain is Probable GTP-binding protein OBGC1, chloroplastic (OBGC1) from Oryza sativa subsp. indica (Rice).